The primary structure comprises 216 residues: Probable transaldolase (216 aa).

K84 functions as the Schiff-base intermediate with substrate in the catalytic mechanism.

Belongs to the transaldolase family. Type 3B subfamily.

Its subcellular location is the cytoplasm. The enzyme catalyses D-sedoheptulose 7-phosphate + D-glyceraldehyde 3-phosphate = D-erythrose 4-phosphate + beta-D-fructose 6-phosphate. It functions in the pathway carbohydrate degradation; pentose phosphate pathway; D-glyceraldehyde 3-phosphate and beta-D-fructose 6-phosphate from D-ribose 5-phosphate and D-xylulose 5-phosphate (non-oxidative stage): step 2/3. Functionally, transaldolase is important for the balance of metabolites in the pentose-phosphate pathway. The protein is Probable transaldolase of Lysinibacillus sphaericus (strain C3-41).